The chain runs to 87 residues: Small ribosomal subunit protein uS17 (87 aa).

Belongs to the universal ribosomal protein uS17 family. Part of the 30S ribosomal subunit.

In terms of biological role, one of the primary rRNA binding proteins, it binds specifically to the 5'-end of 16S ribosomal RNA. The chain is Small ribosomal subunit protein uS17 from Staphylococcus carnosus (strain TM300).